The following is a 97-amino-acid chain: Protein E7 (97 aa).

The segment at Met1–Arg40 is E7 terminal domain. The LXCXE motif; interaction with host RB1 and TMEM173/STING signature appears at Leu22–Glu26. Residues Cys58–Cys94 fold into a zinc finger. The Nuclear export signal signature appears at Leu76–Met84.

It belongs to the papillomaviridae E7 protein family. In terms of assembly, homodimer. Homooligomer. Interacts with host RB1; this interaction induces dissociation of RB1-E2F1 complex thereby disrupting RB1 activity. Interacts with host EP300; this interaction represses EP300 transcriptional activity. Interacts with protein E2; this interaction inhibits E7 oncogenic activity. Interacts with host TMEM173/STING; this interaction impairs the ability of TMEM173/STING to sense cytosolic DNA and promote the production of type I interferon (IFN-alpha and IFN-beta). Post-translationally, highly phosphorylated.

Its subcellular location is the host cytoplasm. The protein resides in the host nucleus. In terms of biological role, plays a role in viral genome replication by driving entry of quiescent cells into the cell cycle. Stimulation of progression from G1 to S phase allows the virus to efficiently use the cellular DNA replicating machinery to achieve viral genome replication. E7 protein has both transforming and trans-activating activities. Induces the disassembly of the E2F1 transcription factor from RB1, with subsequent transcriptional activation of E2F1-regulated S-phase genes. Interferes with host histone deacetylation mediated by HDAC1 and HDAC2, leading to transcription activation. Also plays a role in the inhibition of both antiviral and antiproliferative functions of host interferon alpha. Interaction with host TMEM173/STING impairs the ability of TMEM173/STING to sense cytosolic DNA and promote the production of type I interferon (IFN-alpha and IFN-beta). The protein is Protein E7 of Human papillomavirus 33.